A 210-amino-acid polypeptide reads, in one-letter code: dTTP/UTP pyrophosphatase (210 aa).

A compositionally biased stretch (basic and acidic residues) spans 1-15 (MTHGDNRDGPGRETR). The tract at residues 1-22 (MTHGDNRDGPGRETRSSGPLVL) is disordered. Residue Asp-86 is the Proton acceptor of the active site.

The protein belongs to the Maf family. YhdE subfamily. It depends on a divalent metal cation as a cofactor.

The protein resides in the cytoplasm. The enzyme catalyses dTTP + H2O = dTMP + diphosphate + H(+). It carries out the reaction UTP + H2O = UMP + diphosphate + H(+). Functionally, nucleoside triphosphate pyrophosphatase that hydrolyzes dTTP and UTP. May have a dual role in cell division arrest and in preventing the incorporation of modified nucleotides into cellular nucleic acids. This is dTTP/UTP pyrophosphatase from Rhodospirillum rubrum (strain ATCC 11170 / ATH 1.1.1 / DSM 467 / LMG 4362 / NCIMB 8255 / S1).